The primary structure comprises 460 residues: Serine protease HTRA1 (460 aa).

A signal peptide spans 1-18 (MAMLWLAVLLTCGAPAAL). The IGFBP N-terminal domain occupies 22–92 (SGVGCPSRCD…NGGVARCQCP (71 aa)). Disulfide bonds link C26–C51, C30–C53, C35–C54, C42–C57, C65–C80, C74–C89, C91–C109, and C98–C134. The Kazal-like domain occupies 74–136 (CASGLRCVKN…IPIQRGDCQQ (63 aa)). Positions 183-343 (GSGFIVSEDG…IPSDKIRKFL (161 aa)) are serine protease. Active-site charge relay system residues include H199, D229, and S307. A PDZ domain is found at 344–447 (AESHNRQSTG…LHLVIRRGNE (104 aa)).

It belongs to the peptidase S1C family. Forms homotrimers. In the presence of substrate, may form higher-order multimers in a PDZ-independent manner.

It is found in the cell membrane. It localises to the secreted. The protein localises to the cytoplasm. Its subcellular location is the cytosol. Functionally, serine protease with a variety of targets, including extracellular matrix proteins and proteoglycans such as biglycan, syndecan-4 and glypican-4. Through cleavage of proteoglycans, may release soluble FGF-glycosaminoglycan complexes that promote the range and intensity of FGF signals in the extracellular space. Consequently, facilitates inductive processes in the developing embryo, such as posteriorization, mesoderm induction and neuronal differentiation. Regulates the availability of insulin-like growth factors (IGFs) by cleaving IGF-binding proteins. Inhibits signaling mediated by TGF-beta family members. Consequently, may regulate many physiological processes. Intracellularly, degrades TSC2, leading to the activation of TSC2 downstream targets. The sequence is that of Serine protease HTRA1 (htra1) from Xenopus tropicalis (Western clawed frog).